Reading from the N-terminus, the 258-residue chain is Alpha-fibrinogenase albofibrase (258 aa).

An N-terminal signal peptide occupies residues 1–18 (MVLIRVLANLLILQLSYA). A propeptide spanning residues 19–24 (QKSSEL) is cleaved from the precursor. The Peptidase S1 domain occupies 25 to 249 (VVGGDECNIN…YNDWIQSIIA (225 aa)). Cystine bridges form between Cys-31/Cys-163, Cys-50/Cys-66, Cys-98/Cys-256, Cys-142/Cys-210, Cys-174/Cys-189, and Cys-200/Cys-225. N-linked (GlcNAc...) asparagine glycosylation occurs at Asn-44. Catalysis depends on charge relay system residues His-65 and Asp-110. Ser-204 serves as the catalytic Charge relay system.

It belongs to the peptidase S1 family. Snake venom subfamily. In terms of assembly, monomer. In terms of tissue distribution, expressed by the venom gland.

The protein localises to the secreted. Its function is as follows. The recombinant protein has fibrinogenolytic activity against the Aalpha chain (FGA) of fibrinogen. Activates plasminogen (PLG) (is 4-fold less active than urokinase). Has weak thrombin-like enzyme activity. Has enzymatic activity against a trypsin-like substrate (S-3013) and shows a weaker activity on an activated protein C substrate (S-3125). This is Alpha-fibrinogenase albofibrase from Trimeresurus albolabris (White-lipped pit viper).